We begin with the raw amino-acid sequence, 167 residues long: Translation initiation factor IF-3 (167 aa).

It belongs to the IF-3 family. As to quaternary structure, monomer.

It is found in the cytoplasm. Its function is as follows. IF-3 binds to the 30S ribosomal subunit and shifts the equilibrium between 70S ribosomes and their 50S and 30S subunits in favor of the free subunits, thus enhancing the availability of 30S subunits on which protein synthesis initiation begins. The polypeptide is Translation initiation factor IF-3 (Bacillus anthracis).